A 343-amino-acid chain; its full sequence is MIKASIIGASGYVGIELIRLLLKHPEVEISSIISSSNKDISIENTNPQFKKILNLTFKEFDIDLVKEADVVFCALPHGVSQEYVKVAYDLGKVVIDLSSDFRYKDLTRYSKDYGNHKYPELLNESSYGLCEIFREEIKSSKIVGNPGCYPTSAILGLAPLLKNKLIQKDSIIIDSKSGVSGAGKKADFAYSFCEVDENFKAYGVAKHRHTSEIEEKCSFLFGEDLNLSFTPHLLPVKRGILSTIYATFTKSLNKNELIEIYKEFYRDEFFIRIYEDSLPELKYVTGTNFVDIGLEVDKKTNRVIVISCIDNLIKGAAGQAIQNMNIKFSLNEKTGLVIVGEYF.

The active site involves Cys-148.

The protein belongs to the NAGSA dehydrogenase family. Type 1 subfamily.

It is found in the cytoplasm. It catalyses the reaction N-acetyl-L-glutamate 5-semialdehyde + phosphate + NADP(+) = N-acetyl-L-glutamyl 5-phosphate + NADPH + H(+). It participates in amino-acid biosynthesis; L-arginine biosynthesis; N(2)-acetyl-L-ornithine from L-glutamate: step 3/4. In terms of biological role, catalyzes the NADPH-dependent reduction of N-acetyl-5-glutamyl phosphate to yield N-acetyl-L-glutamate 5-semialdehyde. The protein is N-acetyl-gamma-glutamyl-phosphate reductase of Caldicellulosiruptor saccharolyticus (strain ATCC 43494 / DSM 8903 / Tp8T 6331).